Reading from the N-terminus, the 635-residue chain is Threonine--tRNA ligase (635 aa).

Residues 1-61 (MINIKFPDGS…NHDCELRLIT (61 aa)) enclose the TGS domain. The catalytic stretch occupies residues 242-533 (DHRKIGKALD…LIEHYAGNMP (292 aa)). Zn(2+) contacts are provided by Cys333, His384, and His510.

The protein belongs to the class-II aminoacyl-tRNA synthetase family. Homodimer. It depends on Zn(2+) as a cofactor.

Its subcellular location is the cytoplasm. It catalyses the reaction tRNA(Thr) + L-threonine + ATP = L-threonyl-tRNA(Thr) + AMP + diphosphate + H(+). Catalyzes the attachment of threonine to tRNA(Thr) in a two-step reaction: L-threonine is first activated by ATP to form Thr-AMP and then transferred to the acceptor end of tRNA(Thr). Also edits incorrectly charged L-seryl-tRNA(Thr). In Francisella philomiragia subsp. philomiragia (strain ATCC 25017 / CCUG 19701 / FSC 153 / O#319-036), this protein is Threonine--tRNA ligase.